Reading from the N-terminus, the 404-residue chain is Serine/threonine transporter SstT (404 aa).

9 helical membrane-spanning segments follow: residues 17-37 (IGIGVVIGLLLGILLPDVTAI), 44-64 (FVGALKAIAPLLVFALVVQAI), 75-95 (ITLIIVLYLLGTFLAALVAVI), 138-158 (ALATANYIGVLAWALIFGLAL), 179-199 (IVVWIINVAPIGIMGLVFSTV), 212-232 (LLILVLVGTMLFVALVVNPLL), 287-307 (IPLGAMINMGGAAITINVLTL), 319-339 (FLTALLLSVVAAISACGASGV), and 354-374 (FGISSDLAMQVVGVGFIVGVI).

The protein belongs to the dicarboxylate/amino acid:cation symporter (DAACS) (TC 2.A.23) family.

It is found in the cell membrane. It carries out the reaction L-serine(in) + Na(+)(in) = L-serine(out) + Na(+)(out). It catalyses the reaction L-threonine(in) + Na(+)(in) = L-threonine(out) + Na(+)(out). Involved in the import of serine and threonine into the cell, with the concomitant import of sodium (symport system). The sequence is that of Serine/threonine transporter SstT from Streptococcus equi subsp. zooepidemicus (strain MGCS10565).